The primary structure comprises 428 residues: Histidinol dehydrogenase (428 aa).

NAD(+)-binding residues include Tyr-127, Gln-189, and Asn-212. 3 residues coordinate substrate: Ser-235, Gln-257, and His-260. Zn(2+) contacts are provided by Gln-257 and His-260. Catalysis depends on proton acceptor residues Glu-325 and His-326. His-326, Asp-359, Glu-413, and His-418 together coordinate substrate. Asp-359 lines the Zn(2+) pocket. His-418 is a binding site for Zn(2+).

This sequence belongs to the histidinol dehydrogenase family. Requires Zn(2+) as cofactor.

The enzyme catalyses L-histidinol + 2 NAD(+) + H2O = L-histidine + 2 NADH + 3 H(+). It functions in the pathway amino-acid biosynthesis; L-histidine biosynthesis; L-histidine from 5-phospho-alpha-D-ribose 1-diphosphate: step 9/9. Functionally, catalyzes the sequential NAD-dependent oxidations of L-histidinol to L-histidinaldehyde and then to L-histidine. The polypeptide is Histidinol dehydrogenase (Prochlorococcus marinus subsp. pastoris (strain CCMP1986 / NIES-2087 / MED4)).